The primary structure comprises 391 residues: Phosphoglycerate kinase (391 aa).

Substrate contacts are provided by residues 21–23 (DLN), R36, 59–62 (HLGR), R113, and R146. ATP is bound by residues K197, E319, and 345-348 (GGDT).

The protein belongs to the phosphoglycerate kinase family. As to quaternary structure, monomer.

The protein resides in the cytoplasm. The enzyme catalyses (2R)-3-phosphoglycerate + ATP = (2R)-3-phospho-glyceroyl phosphate + ADP. Its pathway is carbohydrate degradation; glycolysis; pyruvate from D-glyceraldehyde 3-phosphate: step 2/5. The chain is Phosphoglycerate kinase from Shewanella sp. (strain W3-18-1).